A 175-amino-acid polypeptide reads, in one-letter code: Protein MODIFYING WALL LIGNIN-1 (175 aa).

The first 24 residues, 1–24 (MFIFLFGLAAFFLCLSAEFQKAKA), serve as a signal peptide directing secretion. Residues 25–52 (LLRAQVFLKGKDLKWDGESCYLPENRAF) lie on the Cytoplasmic side of the membrane. A helical membrane pass occupies residues 53 to 73 (GLGIAALVCVSVAQIVGNVVI). The Extracellular segment spans residues 74–86 (CRGFTKTDKTRTT). Residues 87–107 (IFCIILLLFSWVNFAVAVTLI) form a helical membrane-spanning segment. Residues 108–135 (SVGASMNREQIYGKGWLNRECYLVKDGV) are Cytoplasmic-facing. The helical transmembrane segment at 136-156 (FAASGFLSVTTMAAILGAFAF) threads the bilayer. Topologically, residues 157–175 (KVKPSLQVENHDKRHTQNV) are extracellular.

It belongs to the DESIGUAL family. Interacts with CRK19.

The protein localises to the cell membrane. Its function is as follows. Together with MWL2, contributes to secondary cell wall biology, specifically lignin biosynthesis. This Arabidopsis thaliana (Mouse-ear cress) protein is Protein MODIFYING WALL LIGNIN-1.